Here is a 350-residue protein sequence, read N- to C-terminus: Leucine-rich repeat-containing protein 23 (350 aa).

The segment covering 1 to 54 (MEDETLEDGPEEEEEDEEEGTAEETNQDVTERDEEEEAEKDEEEDKEEEEEAEK) has biased composition (acidic residues). The segment at 1-64 (MEDETLEDGP…EEPPPHMPLS (64 aa)) is disordered. LRR repeat units lie at residues 107–128 (HLRY…GALT), 129–150 (HLLS…GELP), 151–171 (YLQV…FGHP), 172–193 (RLET…ECSN), 196–216 (SLHT…LNLP), 217–238 (SLRE…EALV), 239–260 (NLTT…SEHL), and 262–283 (ALQY…QKLY). Residues 296-334 (NPCEEEEGYRMETLIALPQLERLDKDFFEEEEKREAAET) form the LRRCT domain. The stretch at 314–344 (QLERLDKDFFEEEEKREAAETKKAREEEMAE) forms a coiled coil. Positions 325 to 350 (EEEKREAAETKKAREEEMAEPGEKGN) are disordered.

It localises to the cytoplasm. The protein localises to the cytoskeleton. Its subcellular location is the flagellum axoneme. This is Leucine-rich repeat-containing protein 23 (lrrc23) from Xenopus tropicalis (Western clawed frog).